The sequence spans 161 residues: Nucleotide-binding protein Gura_0717 (161 aa).

The protein belongs to the YajQ family.

Nucleotide-binding protein. The protein is Nucleotide-binding protein Gura_0717 of Geotalea uraniireducens (strain Rf4) (Geobacter uraniireducens).